We begin with the raw amino-acid sequence, 397 residues long: 2-deoxy-scyllo-inosose synthase (397 aa).

Residues Asp41, 71 to 74, 103 to 107, 127 to 128, 138 to 140, and 149 to 150 contribute to the NAD(+) site; these read EPYK, GVIGN, TS, SLK, and KN. Residue Lys140 is part of the active site. Position 182 (Glu182) interacts with Co(2+). The active site involves Glu242. Co(2+)-binding residues include His245 and His261.

Belongs to the sugar phosphate cyclases superfamily. DOI synthase family. Requires NAD(+) as cofactor. It depends on Co(2+) as a cofactor.

It catalyses the reaction D-glucose 6-phosphate = 2-deoxy-L-scyllo-inosose + phosphate. It participates in metabolic intermediate biosynthesis; 2-deoxystreptamine biosynthesis; 2-deoxystreptamine from D-glucose 6-phosphate: step 1/4. The protein operates within antibiotic biosynthesis; gentamicin biosynthesis. Functionally, catalyzes the intramolecular carbocycle formation from D-glucose-6-phosphate to 2-deoxy-scyllo-inosose (DOI). This is 2-deoxy-scyllo-inosose synthase (gtmA) from Micromonospora echinospora (Micromonospora purpurea).